We begin with the raw amino-acid sequence, 212 residues long: MSEAAPAAPAAAPPAEKAPAKKKAAKKPAGVRRKASGPPVSELITKAVAASKERSGVSLAALKKALAAAGYDVEKNNSRIKLGLKSLVSKGILVQTKGTGASGSFKLNKKAASGEAKPQAKKAGAAKAKKPAGAAKKPKKATGAATPKKAAKKTPKKAKKPAAAAVTKKVAKSPKKAKVTKPKKVKSASKAVKPKAAKPKVAKAKKVAAKKK.

Over residues 1-17 (MSEAAPAAPAAAPPAEK) the composition is skewed to low complexity. Residues 1–41 (MSEAAPAAPAAAPPAEKAPAKKKAAKKPAGVRRKASGPPVS) form a disordered region. The residue at position 2 (serine 2) is an N-acetylserine. Serine 2 is modified (phosphoserine). Lysine 17 carries the N6-acetyllysine modification. Residues 20-35 (AKKKAAKKPAGVRRKA) are compositionally biased toward basic residues. Lysine 23, lysine 26, and lysine 27 each carry N6-(2-hydroxyisobutyryl)lysine. Lysine 34 is modified (N6-(beta-hydroxybutyryl)lysine; alternate). Lysine 34 bears the N6-crotonyllysine; alternate mark. Position 34 is an N6-methyllysine; alternate (lysine 34). The H15 domain occupies 36–109 (SGPPVSELIT…GASGSFKLNK (74 aa)). The residue at position 46 (lysine 46) is an N6-(2-hydroxyisobutyryl)lysine. Lysine 52 carries the post-translational modification N6-(beta-hydroxybutyryl)lysine; alternate. Lysine 52 bears the N6-(2-hydroxyisobutyryl)lysine; alternate mark. At arginine 54 the chain carries Citrulline. Lysine 63 is subject to N6-(2-hydroxyisobutyryl)lysine. Lysine 64 carries the post-translational modification N6-(beta-hydroxybutyryl)lysine; alternate. Position 64 is an N6-crotonyllysine; alternate (lysine 64). An N6-(2-hydroxyisobutyryl)lysine; alternate modification is found at lysine 64. N6-(2-hydroxyisobutyryl)lysine occurs at positions 75 and 81. 2 positions are modified to N6-(beta-hydroxybutyryl)lysine; alternate: lysine 85 and lysine 90. N6-crotonyllysine; alternate is present on residues lysine 85, lysine 90, and lysine 97. N6-(2-hydroxyisobutyryl)lysine; alternate is present on residues lysine 85, lysine 90, and lysine 97. The residue at position 97 (lysine 97) is an N6-succinyllysine; alternate. The segment at 98 to 212 (GTGASGSFKL…KAKKVAAKKK (115 aa)) is disordered. Serine 104 carries the post-translational modification Phosphoserine; by PKC. Lysine 106 bears the N6-(beta-hydroxybutyryl)lysine mark. N6-(2-hydroxyisobutyryl)lysine occurs at positions 110, 117, 121, 129, and 136. Residues 121-148 (KKAGAAKAKKPAGAAKKPKKATGAATPK) are compositionally biased toward low complexity. A Phosphothreonine modification is found at threonine 146. Lysine 148 is subject to N6-(2-hydroxyisobutyryl)lysine. The span at 149-160 (KAAKKTPKKAKK) shows a compositional bias: basic residues. An N6-crotonyllysine; alternate mark is found at lysine 159 and lysine 168. N6-(2-hydroxyisobutyryl)lysine; alternate occurs at positions 159 and 168. Residues 169 to 212 (KVAKSPKKAKVTKPKKVKSASKAVKPKAAKPKVAKAKKVAAKKK) are compositionally biased toward basic residues. Lysine 186 carries the post-translational modification N6-methyllysine; by EHMT1 and EHMT2. At serine 187 the chain carries ADP-ribosylserine. The residue at position 212 (lysine 212) is an N6-(2-hydroxyisobutyryl)lysine.

It belongs to the histone H1/H5 family. Interacts with TSC22D1 isoform 2. Post-translationally, H1 histones are progressively phosphorylated during the cell cycle, becoming maximally phosphorylated during late G2 phase and M phase, and being dephosphorylated sharply thereafter. In terms of processing, crotonylation (Kcr) is specifically present in male germ cells and marks testis-specific genes in post-meiotic cells, including X-linked genes that escape sex chromosome inactivation in haploid cells. Crotonylation marks active promoters and enhancers and confers resistance to transcriptional repressors. It is also associated with post-meiotically activated genes on autosomes. ADP-ribosylated on Ser-187 in response to DNA damage. Post-translationally, citrullination at Arg-54 (H1R54ci) by PADI4 takes place within the DNA-binding site of H1 and results in its displacement from chromatin and global chromatin decondensation, thereby promoting pluripotency and stem cell maintenance. In terms of processing, hydroxybutyrylation of histones is induced by starvation.

The protein localises to the nucleus. The protein resides in the chromosome. Its function is as follows. Histone H1 protein binds to linker DNA between nucleosomes forming the macromolecular structure known as the chromatin fiber. Histones H1 are necessary for the condensation of nucleosome chains into higher-order structured fibers. Also acts as a regulator of individual gene transcription through chromatin remodeling, nucleosome spacing and DNA methylation. The polypeptide is Histone H1.2 (Mus musculus (Mouse)).